The sequence spans 326 residues: Lipopolysaccharide heptosyltransferase 1 (326 aa).

ADP is bound by residues T187, T188, K192, E222, and M242. Residues T187, T188, K192, E222, M242, D261, T262, G263, and H266 each contribute to the ADP-L-glycero-beta-D-manno-heptose site. The ADP site is built by T262 and G263.

This sequence belongs to the glycosyltransferase 9 family. Monomer.

It localises to the cell inner membrane. It carries out the reaction an alpha-Kdo-(2-&gt;4)-alpha-Kdo-(2-&gt;6)-lipid A + ADP-L-glycero-beta-D-manno-heptose = an L-alpha-D-Hep-(1-&gt;5)-[alpha-Kdo-(2-&gt;4)]-alpha-Kdo-(2-&gt;6)-lipid A + ADP + H(+). The enzyme catalyses alpha-Kdo-(2-&gt;4)-alpha-Kdo-(2-&gt;6)-lipid A (E. coli) + ADP-L-glycero-beta-D-manno-heptose = L-alpha-D-Hep-(1-&gt;5)-[alpha-Kdo-(2-&gt;4)]-alpha-Kdo-(2-&gt;6)-lipid A (E. coli) + ADP + H(+). Its pathway is bacterial outer membrane biogenesis; LPS core biosynthesis. With respect to regulation, inhibited by ADP-L-glycero-beta-D-gluco-2-deoxy-2-fluoro-heptose (ADP-2F-heptose), a non-cleavable analog of the substrate ADP-L-glycero-beta-D-manno-heptose. Functionally, glycosyltransferase involved in the biosynthesis of the core oligosaccharide region of lipopolysaccharide (LPS). Catalyzes the addition of the first heptose unit to one 3-deoxy-D-manno-octulosonic acid (Kdo) residue of the Kdo2-lipid A module. In Escherichia coli O18:K1:H7 (strain RS218 / NMEC), this protein is Lipopolysaccharide heptosyltransferase 1.